Reading from the N-terminus, the 502-residue chain is Glycerol kinase (502 aa).

Threonine 13 is an ADP binding site. ATP contacts are provided by threonine 13, threonine 14, and serine 15. Threonine 13 contacts sn-glycerol 3-phosphate. An ADP-binding site is contributed by arginine 17. Sn-glycerol 3-phosphate-binding residues include arginine 83, glutamate 84, tyrosine 136, and aspartate 246. Residues arginine 83, glutamate 84, tyrosine 136, aspartate 246, and glutamine 247 each contribute to the glycerol site. The ADP site is built by threonine 268 and glycine 311. Threonine 268, glycine 311, glutamine 315, and glycine 412 together coordinate ATP. Residues glycine 412 and asparagine 416 each coordinate ADP.

It belongs to the FGGY kinase family.

The catalysed reaction is glycerol + ATP = sn-glycerol 3-phosphate + ADP + H(+). It participates in polyol metabolism; glycerol degradation via glycerol kinase pathway; sn-glycerol 3-phosphate from glycerol: step 1/1. With respect to regulation, inhibited by fructose 1,6-bisphosphate (FBP). In terms of biological role, key enzyme in the regulation of glycerol uptake and metabolism. Catalyzes the phosphorylation of glycerol to yield sn-glycerol 3-phosphate. The chain is Glycerol kinase from Francisella tularensis subsp. tularensis (strain FSC 198).